The primary structure comprises 179 residues: Large ribosomal subunit protein uL5 (179 aa).

This sequence belongs to the universal ribosomal protein uL5 family. Part of the 50S ribosomal subunit; part of the 5S rRNA/L5/L18/L25 subcomplex. Contacts the 5S rRNA and the P site tRNA. Forms a bridge to the 30S subunit in the 70S ribosome.

In terms of biological role, this is one of the proteins that bind and probably mediate the attachment of the 5S RNA into the large ribosomal subunit, where it forms part of the central protuberance. In the 70S ribosome it contacts protein S13 of the 30S subunit (bridge B1b), connecting the 2 subunits; this bridge is implicated in subunit movement. Contacts the P site tRNA; the 5S rRNA and some of its associated proteins might help stabilize positioning of ribosome-bound tRNAs. The sequence is that of Large ribosomal subunit protein uL5 from Pelobacter propionicus (strain DSM 2379 / NBRC 103807 / OttBd1).